A 305-amino-acid polypeptide reads, in one-letter code: Ribonuclease HIII (305 aa).

In terms of domain architecture, RNase H type-2 spans 91–305; the sequence is WSVIGSDEVG…ANTQKAQKLL (215 aa). The a divalent metal cation site is built by Asp97, Glu98, and Asp201.

Belongs to the RNase HII family. RnhC subfamily. Mn(2+) serves as cofactor. Requires Mg(2+) as cofactor.

The protein resides in the cytoplasm. The enzyme catalyses Endonucleolytic cleavage to 5'-phosphomonoester.. Its function is as follows. Endonuclease that specifically degrades the RNA of RNA-DNA hybrids. The polypeptide is Ribonuclease HIII (Enterococcus faecalis (strain ATCC 700802 / V583)).